The primary structure comprises 99 residues: Co-chaperonin GroES (99 aa).

The protein belongs to the GroES chaperonin family. As to quaternary structure, heptamer of 7 subunits arranged in a ring. Interacts with the chaperonin GroEL.

Its subcellular location is the cytoplasm. Together with the chaperonin GroEL, plays an essential role in assisting protein folding. The GroEL-GroES system forms a nano-cage that allows encapsulation of the non-native substrate proteins and provides a physical environment optimized to promote and accelerate protein folding. GroES binds to the apical surface of the GroEL ring, thereby capping the opening of the GroEL channel. This chain is Co-chaperonin GroES, found in Corynebacterium jeikeium (strain K411).